A 1976-amino-acid polypeptide reads, in one-letter code: Myosin-10 (1976 aa).

Omega-N-methylarginine is present on Arg18. Positions 31–81 (TAKKLVWIPSERHGFEAASIKEERGDEVMVELAENGKKAMVNKDDIQKMNP) constitute a Myosin N-terminal SH3-like domain. Residues 85–783 (SKVEDMAELT…VLAHLEEERD (699 aa)) enclose the Myosin motor domain. Position 178-185 (178-185 (GESGAGKT)) interacts with ATP. Lys442 bears the N6-acetyllysine mark. Residues 661-683 (LTKLMATLRNTNPNFVRCIIPNH) form an actin-binding region. An IQ domain is found at 786 to 815 (ITDIIIFFQAVCRGYLARKAFAKKQQQLSA). Positions 845-1976 (LQVTRQEEEL…VNETQPPQSE (1132 aa)) form a coiled coil. The tract at residues 1125 to 1175 (EDFESEKASRNKAEKQKRDLSEELEALKTELEDTLDTTAAQQELRTKREQE) is disordered. The segment covering 1129–1155 (SEKASRNKAEKQKRDLSEELEALKTEL) has biased composition (basic and acidic residues). Residue Ser1145 is modified to Phosphoserine. N6-acetyllysine is present on residues Lys1241, Lys1301, and Lys1645. Disordered regions lie at residues 1697–1718 (ASSERARRHAEQERDELADEIA) and 1874–1976 (KANA…PQSE). Over residues 1698–1708 (SSERARRHAEQ) the composition is skewed to basic and acidic residues. An Omega-N-methylarginine modification is found at Arg1930. Phosphoserine occurs at positions 1935, 1937, 1938, and 1939. An Omega-N-methylarginine modification is found at Arg1940. Phosphoserine occurs at positions 1952 and 1956. Thr1960 carries the phosphothreonine modification. Over residues 1967–1976 (VNETQPPQSE) the composition is skewed to polar residues. Ser1975 carries the phosphoserine modification.

Belongs to the TRAFAC class myosin-kinesin ATPase superfamily. Myosin family. Myosin is a hexameric protein that consists of 2 heavy chain subunits (MHC), 2 alkali light chain subunits (MLC) and 2 regulatory light chain subunits (MLC-2). Interacts with PLEKHG6. Interacts with ECPAS. Interacts with KIF26B. Interacts with LARP6. Interacts with MCC. Interacts with CFAP95. Post-translationally, phosphorylated by ABL2.

It is found in the cell projection. Its subcellular location is the lamellipodium. Its function is as follows. Involved with LARP6 in the stabilization of type I collagen mRNAs for CO1A1 and CO1A2. During cell spreading, plays an important role in cytoskeleton reorganization, focal contacts formation (in the central part but not the margins of spreading cells), and lamellipodial extension; this function is mechanically antagonized by MYH9. Cellular myosin that appears to play a role in cytokinesis, cell shape, and specialized functions such as secretion and capping. This chain is Myosin-10 (Myh10), found in Rattus norvegicus (Rat).